Here is a 476-residue protein sequence, read N- to C-terminus: Membrane-bound lytic murein transglycosylase F (476 aa).

A signal peptide spans 1 to 15 (MRSFLLILFCVSLLT). The tract at residues 16–258 (GCQGERVDAA…HLNEKYFAHV (243 aa)) is non-LT domain. The interval 259 to 476 (KRFDYVDTRA…QSEISAAQPN (218 aa)) is LT domain. E303 is a catalytic residue. The tract at residues 456–476 (EAQQQTAEKQSQSEISAAQPN) is disordered.

It in the N-terminal section; belongs to the bacterial solute-binding protein 3 family. In the C-terminal section; belongs to the transglycosylase Slt family.

The protein localises to the cell outer membrane. The enzyme catalyses Exolytic cleavage of the (1-&gt;4)-beta-glycosidic linkage between N-acetylmuramic acid (MurNAc) and N-acetylglucosamine (GlcNAc) residues in peptidoglycan, from either the reducing or the non-reducing ends of the peptidoglycan chains, with concomitant formation of a 1,6-anhydrobond in the MurNAc residue.. In terms of biological role, murein-degrading enzyme that degrades murein glycan strands and insoluble, high-molecular weight murein sacculi, with the concomitant formation of a 1,6-anhydromuramoyl product. Lytic transglycosylases (LTs) play an integral role in the metabolism of the peptidoglycan (PG) sacculus. Their lytic action creates space within the PG sacculus to allow for its expansion as well as for the insertion of various structures such as secretion systems and flagella. The polypeptide is Membrane-bound lytic murein transglycosylase F (Shewanella loihica (strain ATCC BAA-1088 / PV-4)).